A 121-amino-acid chain; its full sequence is Large ribosomal subunit protein uL14 (121 aa).

This sequence belongs to the universal ribosomal protein uL14 family. As to quaternary structure, part of the 50S ribosomal subunit. Forms a cluster with proteins L3 and L19. In the 70S ribosome, L14 and L19 interact and together make contacts with the 16S rRNA in bridges B5 and B8.

Its function is as follows. Binds to 23S rRNA. Forms part of two intersubunit bridges in the 70S ribosome. The sequence is that of Large ribosomal subunit protein uL14 from Prochlorococcus marinus (strain MIT 9303).